The primary structure comprises 543 residues: Chaperonin GroEL (543 aa).

ATP contacts are provided by residues 29–32, 86–90, glycine 413, 478–480, and aspartate 494; these read TIGP, DGTTT, and NAA.

This sequence belongs to the chaperonin (HSP60) family. As to quaternary structure, forms a cylinder of 14 subunits composed of two heptameric rings stacked back-to-back. Interacts with the co-chaperonin GroES.

Its subcellular location is the cytoplasm. It carries out the reaction ATP + H2O + a folded polypeptide = ADP + phosphate + an unfolded polypeptide.. Together with its co-chaperonin GroES, plays an essential role in assisting protein folding. The GroEL-GroES system forms a nano-cage that allows encapsulation of the non-native substrate proteins and provides a physical environment optimized to promote and accelerate protein folding. The protein is Chaperonin GroEL of Limosilactobacillus fermentum (strain NBRC 3956 / LMG 18251) (Lactobacillus fermentum).